Here is a 196-residue protein sequence, read N- to C-terminus: Ribosome-binding factor A (196 aa).

The protein belongs to the RbfA family. As to quaternary structure, monomer. Binds 30S ribosomal subunits, but not 50S ribosomal subunits or 70S ribosomes.

It localises to the cytoplasm. One of several proteins that assist in the late maturation steps of the functional core of the 30S ribosomal subunit. Associates with free 30S ribosomal subunits (but not with 30S subunits that are part of 70S ribosomes or polysomes). Required for efficient processing of 16S rRNA. May interact with the 5'-terminal helix region of 16S rRNA. This chain is Ribosome-binding factor A, found in Tropheryma whipplei (strain TW08/27) (Whipple's bacillus).